A 584-amino-acid chain; its full sequence is Tricyclene synthase 1e20, chloroplastic (584 aa).

The transit peptide at 1–45 directs the protein to the chloroplast; it reads MIYIWICFYLQTTLLPCSLSTRTKFAICHNTSKLHRAAYKTSRWN. Asn30, Asn209, and Asn322 each carry an N-linked (GlcNAc...) asparagine glycan. The Mg(2+) site is built by Asp341 and Asp345. The DDXXD motif motif lies at 341 to 345; sequence DDIFD. Asn387 and Asn468 each carry an N-linked (GlcNAc...) asparagine glycan. The Mg(2+) site is built by Asn485, Ser489, and Glu493. A glycan (N-linked (GlcNAc...) asparagine) is linked at Asn512.

It belongs to the terpene synthase family. Tpsg subfamily. Requires Mg(2+) as cofactor. The cofactor is Mn(2+). In terms of tissue distribution, accumulates at low levels in flowers; mostly expressed in both upper and lower petal lobes, and, to a lower extent, in tube and stamens.

It localises to the plastid. Its subcellular location is the chloroplast stroma. The catalysed reaction is (2E)-geranyl diphosphate = tricyclene + diphosphate. It catalyses the reaction (2E)-geranyl diphosphate = beta-myrcene + diphosphate. Its pathway is secondary metabolite biosynthesis; terpenoid biosynthesis. In terms of biological role, may contribute to floral scent emission. The protein is Tricyclene synthase 1e20, chloroplastic (1e20) of Antirrhinum majus (Garden snapdragon).